The following is a 250-amino-acid chain: Small ribosomal subunit protein uS2 (250 aa).

This sequence belongs to the universal ribosomal protein uS2 family.

The protein is Small ribosomal subunit protein uS2 of Paracidovorax citrulli (strain AAC00-1) (Acidovorax citrulli).